The chain runs to 551 residues: Endolytic murein transglycosylase (551 aa).

Topologically, residues 1 to 187 (MSEKSREEEK…PKKEKKSHVK (187 aa)) are cytoplasmic. A disordered region spans residues 38 to 180 (VRTPANEPSA…EGAKPAKPKK (143 aa)). Low complexity-rich tracts occupy residues 100–110 (PSSPAEESGSR) and 145–157 (QAGP…ATET). The span at 159-174 (DIIRDTSRRSRREGAK) shows a compositional bias: basic and acidic residues. A helical transmembrane segment spans residues 188–208 (AFVISFLVFLALLSAGGYFGY). The Extracellular segment spans residues 209-551 (QYVLDSLLPI…VAEHVNSKLN (343 aa)).

Belongs to the transglycosylase MltG family. Interacts with RodZ. Interacts with MreC in the elongasome; interaction is strongly reduced when the 90 C-terminal residues of MreC are missing. Interacts with KhpB (also called EloR/Jag) via MltG's N-terminus, suggesting the N-terminus of MltG is cytoplasmic.

The protein localises to the cell membrane. It carries out the reaction a peptidoglycan chain = a peptidoglycan chain with N-acetyl-1,6-anhydromuramyl-[peptide] at the reducing end + a peptidoglycan chain with N-acetylglucosamine at the non-reducing end.. Functionally, functions as a peptidoglycan terminase that cleaves nascent peptidoglycan strands endolytically to terminate their elongation. In terms of biological role, mutations in this gene suppress deletion of PBP2b (penA); truncation at residue 168, undefined changes between residue Ile-447 and Ala-505, and mutation of Ala-505 suppress the penA deletion. Probably part of the elongasome which synthesizes peripheral peptidoglycan. The chain is Endolytic murein transglycosylase from Streptococcus pneumoniae (strain ATCC BAA-255 / R6).